We begin with the raw amino-acid sequence, 204 residues long: N-alpha-acetyltransferase 40 (204 aa).

The N-acetyltransferase domain maps to 39 to 202 (EIYHHLEKGL…YYILYTKSRK (164 aa)). Substrate contacts are provided by residues Tyr-64, 107-109 (TVE), and Tyr-118. Residues 120 to 122 (IQL) and 128 to 133 (GRNVGK) contribute to the acetyl-CoA site. Thr-154 serves as a coordination point for substrate. Acetyl-CoA is bound at residue Asn-159. Ser-176 is a substrate binding site.

Belongs to the acetyltransferase family. NAA40 subfamily.

It localises to the cytoplasm. The protein localises to the nucleus. It carries out the reaction N-terminal L-seryl-[histone H4] + acetyl-CoA = N-terminal N(alpha)-acetyl-L-seryl-[histone H4] + CoA + H(+). The catalysed reaction is N-terminal L-seryl-[histone H2A] + acetyl-CoA = N-terminal N(alpha)-acetyl-L-seryl-[histone H2A] + CoA + H(+). Functionally, N-alpha-acetyltransferase that specifically mediates the acetylation of the N-terminal residues of histones H4 and H2A. The protein is N-alpha-acetyltransferase 40 of Schizosaccharomyces pombe (strain 972 / ATCC 24843) (Fission yeast).